Reading from the N-terminus, the 390-residue chain is Neutrophil cytosol factor 1 (390 aa).

In terms of domain architecture, PX spans T4–L125. SH3 domains follow at residues I156–S215 and Y226–Q285. Positions Q285–V390 are disordered. Phosphoserine occurs at positions 303 and 304. The span at H309–R318 shows a compositional bias: basic residues. A phosphoserine mark is found at S320, S328, S345, and S348.

As to quaternary structure, component of the phagocyte NADPH oxidase complex composed of an obligatory core heterodimer formed by the membrane proteins CYBA and CYBB and the cytosolic regulatory subunits NCF1/p47-phox, NCF2/p67-phox, NCF4/p40-phox and the small GTPase RAC1 or RAC2. Part of a cytosolic complex composed at least by NCF1, NCF2 and NCF4. Interacts (via C-terminus) with NCF2 (via the C-terminal SH3 domain). Interacts with NCF4. Interacts with CYBB. Interacts (via the second SH3 domain) with CYBA; interaction is phosphorylation-dependent. Interacts with NOXA1. Interacts with ADAM15. Interacts with TRAF4. Interacts with FASLG. Interacts with PARK7 (via C-terminus); the interaction is enhanced by LPS and modulates NCF1 phosphorylation and membrane translocation. Post-translationally, phosphorylated by PRKCD; phosphorylation induces activation of NCF1, leading to assembly and activation of the NADPH oxidase complex. Detected in peripheral blood monocytes and neutrophils (at protein level).

Its subcellular location is the cytoplasm. The protein localises to the cytosol. It is found in the membrane. In terms of biological role, subunit of the phagocyte NADPH oxidase complex that mediates the transfer of electrons from cytosolic NADPH to O2 to produce the superoxide anion (O2(-)). In the activated complex, electrons are first transferred from NADPH to flavin adenine dinucleotide (FAD) and subsequently transferred via two heme molecules to molecular oxygen, producing superoxide through an outer-sphere reaction. Activation of the NADPH oxidase complex is initiated by the assembly of cytosolic subunits of the NADPH oxidase complex with the core NADPH oxidase complex to form a complex at the plasma membrane or phagosomal membrane. This activation process is initiated by phosphorylation dependent binding of the cytosolic NCF1/p47-phox subunit to the C-terminus of CYBA/p22-phox. The protein is Neutrophil cytosol factor 1 of Homo sapiens (Human).